A 246-amino-acid chain; its full sequence is Carboxy-S-adenosyl-L-methionine synthase (246 aa).

S-adenosyl-L-methionine contacts are provided by residues Tyr-43, 68–70 (GCS), 93–94 (DN), 121–122 (DI), Asn-136, and Arg-203.

It belongs to the class I-like SAM-binding methyltransferase superfamily. Cx-SAM synthase family. As to quaternary structure, homodimer.

The enzyme catalyses prephenate + S-adenosyl-L-methionine = carboxy-S-adenosyl-L-methionine + 3-phenylpyruvate + H2O. Catalyzes the conversion of S-adenosyl-L-methionine (SAM) to carboxy-S-adenosyl-L-methionine (Cx-SAM). In Vibrio cholerae serotype O1 (strain ATCC 39541 / Classical Ogawa 395 / O395), this protein is Carboxy-S-adenosyl-L-methionine synthase.